The primary structure comprises 86 residues: Toxin Td2 (86 aa).

An N-terminal signal peptide occupies residues 1-20; the sequence is MTRFVLFLNCFFLICMVVEC. The region spanning 21-83 is the LCN-type CS-alpha/beta domain; that stretch reads KEGYLMGADG…TWDRATNTCG (63 aa). Intrachain disulfides connect Cys31-Cys82, Cys35-Cys57, Cys43-Cys63, and Cys47-Cys65. Arg84 is subject to Arginine amide.

In terms of tissue distribution, expressed by the venom gland.

It localises to the secreted. In terms of biological role, beta toxins bind voltage-independently at site-4 of sodium channels (Nav) and shift the voltage of activation toward more negative potentials thereby affecting sodium channel activation and promoting spontaneous and repetitive firing. In Tityus discrepans (Venezuelan scorpion), this protein is Toxin Td2.